The primary structure comprises 117 residues: Large ribosomal subunit protein uL24 (117 aa).

The span at 1–10 (MSKQPRKQRK) shows a compositional bias: basic residues. The tract at residues 1–28 (MSKQPRKQRKALYNAPAHARGKHMSATL) is disordered.

This sequence belongs to the universal ribosomal protein uL24 family. As to quaternary structure, part of the 50S ribosomal subunit.

Its function is as follows. One of two assembly initiator proteins, it binds directly to the 5'-end of the 23S rRNA, where it nucleates assembly of the 50S subunit. In terms of biological role, located at the polypeptide exit tunnel on the outside of the subunit. The sequence is that of Large ribosomal subunit protein uL24 from Methanobrevibacter smithii (strain ATCC 35061 / DSM 861 / OCM 144 / PS).